The primary structure comprises 708 residues: DNA ligase 2 (708 aa).

NAD(+) contacts are provided by residues 71–75 (DADYD), 121–122 (SL), and glutamate 153. Residue lysine 155 is the N6-AMP-lysine intermediate of the active site. Arginine 176, glutamate 213, lysine 330, and lysine 354 together coordinate NAD(+). Residues cysteine 448, cysteine 451, cysteine 466, and cysteine 471 each coordinate Zn(2+). A BRCT domain is found at 627 to 708 (ADAGTLAGKE…LLRLAEAAPE (82 aa)).

It belongs to the NAD-dependent DNA ligase family. LigA subfamily. Mg(2+) serves as cofactor. Requires Mn(2+) as cofactor.

It carries out the reaction NAD(+) + (deoxyribonucleotide)n-3'-hydroxyl + 5'-phospho-(deoxyribonucleotide)m = (deoxyribonucleotide)n+m + AMP + beta-nicotinamide D-nucleotide.. Functionally, DNA ligase that catalyzes the formation of phosphodiester linkages between 5'-phosphoryl and 3'-hydroxyl groups in double-stranded DNA using NAD as a coenzyme and as the energy source for the reaction. It is essential for DNA replication and repair of damaged DNA. The sequence is that of DNA ligase 2 from Opitutus terrae (strain DSM 11246 / JCM 15787 / PB90-1).